A 318-amino-acid polypeptide reads, in one-letter code: Methionyl-tRNA formyltransferase (318 aa).

Position 115–118 (115–118) interacts with (6S)-5,6,7,8-tetrahydrofolate; the sequence is SLLP.

Belongs to the Fmt family.

The enzyme catalyses L-methionyl-tRNA(fMet) + (6R)-10-formyltetrahydrofolate = N-formyl-L-methionyl-tRNA(fMet) + (6S)-5,6,7,8-tetrahydrofolate + H(+). Attaches a formyl group to the free amino group of methionyl-tRNA(fMet). The formyl group appears to play a dual role in the initiator identity of N-formylmethionyl-tRNA by promoting its recognition by IF2 and preventing the misappropriation of this tRNA by the elongation apparatus. The protein is Methionyl-tRNA formyltransferase of Deinococcus radiodurans (strain ATCC 13939 / DSM 20539 / JCM 16871 / CCUG 27074 / LMG 4051 / NBRC 15346 / NCIMB 9279 / VKM B-1422 / R1).